A 264-amino-acid polypeptide reads, in one-letter code: Hydroxyethylthiazole kinase (264 aa).

Methionine 52 is a binding site for substrate. ATP-binding residues include arginine 127 and threonine 173. Glycine 200 contacts substrate.

It belongs to the Thz kinase family. It depends on Mg(2+) as a cofactor.

The catalysed reaction is 5-(2-hydroxyethyl)-4-methylthiazole + ATP = 4-methyl-5-(2-phosphooxyethyl)-thiazole + ADP + H(+). The protein operates within cofactor biosynthesis; thiamine diphosphate biosynthesis; 4-methyl-5-(2-phosphoethyl)-thiazole from 5-(2-hydroxyethyl)-4-methylthiazole: step 1/1. Functionally, catalyzes the phosphorylation of the hydroxyl group of 4-methyl-5-beta-hydroxyethylthiazole (THZ). The polypeptide is Hydroxyethylthiazole kinase (Serratia proteamaculans (strain 568)).